A 432-amino-acid chain; its full sequence is Delta-aminolevulinic acid dehydratase, chloroplastic (432 aa).

The disordered stretch occupies residues 84-113; it reads AAPPVPAKPSAPEGTPAISPLVMPARPRRN. Lys300 serves as the catalytic Schiff-base intermediate with substrate. Residues Arg310 and Lys322 each contribute to the 5-aminolevulinate site. Residue Glu338 participates in Mg(2+) binding. Residue Lys353 is the Schiff-base intermediate with substrate of the active site. The 5-aminolevulinate site is built by Ser379 and Tyr418.

Belongs to the ALAD family. Homooctamer. Mg(2+) is required as a cofactor.

Its subcellular location is the plastid. It is found in the chloroplast. It carries out the reaction 2 5-aminolevulinate = porphobilinogen + 2 H2O + H(+). The protein operates within porphyrin-containing compound metabolism; protoporphyrin-IX biosynthesis; coproporphyrinogen-III from 5-aminolevulinate: step 1/4. Catalyzes an early step in the biosynthesis of tetrapyrroles. Binds two molecules of 5-aminolevulinate per subunit, each at a distinct site, and catalyzes their condensation to form porphobilinogen. The chain is Delta-aminolevulinic acid dehydratase, chloroplastic (HEMB) from Physcomitrium patens (Spreading-leaved earth moss).